The chain runs to 546 residues: MAAKEIIFSDVARSRLVEGVNILANAVKVTLGPKGRNVVLERSFGSPVVTKDGVSVAKEIELSDRVQNIGAQLVKEVASRTSDAAGDGTTTATVLAQAIVREGQKYVAAGLNPLDLKRGIDKAVIAAIEELKKISKPTTTSKEIAQVATISANGEESIGQRIAEAIDRVGKEGVITVEDGKSLDDELDVVEGLQFDRGYLSPYFINDQDKQVAVLDNPFVLLHDRKVSNIRDLLPILEQVAKAGRPLLIIAEDVEGEALATLVVNNIRGILKTVAVKAPGFGDRRKALLEDIAILTGGQVIAEETGLSLEKATLAELGQAKRIEVGKENTTVIDGAGDSKNIEARVKQIRTQIEEATSDYDREKLQERVAKLAGGVAVIKVGGATEIEVKEKKDRVDDALHATRAAVEEGIVPGGGVALIRVKQAISGLKGANADQDAGIKIVLRALEEPLRQIVTNAGEEASVVVAKVAQGTGNFGYNAQTGEYGDLVQSGVLDPTKVTRTALQNASSVAGLLLTTDATVHEAPKDTPAAGQPGGPGAGGPGLDF.

ATP is bound by residues 30–33, lysine 51, 87–91, glycine 415, and aspartate 495; these read TLGP and DGTTT. The interval 524-546 is disordered; that stretch reads APKDTPAAGQPGGPGAGGPGLDF. Over residues 533–546 the composition is skewed to gly residues; it reads QPGGPGAGGPGLDF.

This sequence belongs to the chaperonin (HSP60) family. Forms a cylinder of 14 subunits composed of two heptameric rings stacked back-to-back. Interacts with the co-chaperonin GroES.

The protein resides in the cytoplasm. The enzyme catalyses ATP + H2O + a folded polypeptide = ADP + phosphate + an unfolded polypeptide.. Together with its co-chaperonin GroES, plays an essential role in assisting protein folding. The GroEL-GroES system forms a nano-cage that allows encapsulation of the non-native substrate proteins and provides a physical environment optimized to promote and accelerate protein folding. The sequence is that of Chaperonin GroEL 4 from Paraburkholderia xenovorans (strain LB400).